The sequence spans 541 residues: Membrane protein insertase YidC (541 aa).

The helical transmembrane segment at 7–27 (ILLLALALVSFLLFQQWQVET) threads the bilayer. Polar residues predominate over residues 34–55 (TVSTVQQTHKNGDVPTSSTANS). Residues 34-59 (TVSTVQQTHKNGDVPTSSTANSDAPV) are disordered. 4 consecutive transmembrane segments (helical) span residues 343-363 (SFIQ…TFIV), 418-438 (LGGC…YWAL), 456-476 (LSAQ…MFLI), and 495-515 (FIPV…VLYW).

This sequence belongs to the OXA1/ALB3/YidC family. Type 1 subfamily. As to quaternary structure, interacts with the Sec translocase complex via SecD. Specifically interacts with transmembrane segments of nascent integral membrane proteins during membrane integration.

The protein resides in the cell inner membrane. Its function is as follows. Required for the insertion and/or proper folding and/or complex formation of integral membrane proteins into the membrane. Involved in integration of membrane proteins that insert both dependently and independently of the Sec translocase complex, as well as at least some lipoproteins. Aids folding of multispanning membrane proteins. This Aliivibrio salmonicida (strain LFI1238) (Vibrio salmonicida (strain LFI1238)) protein is Membrane protein insertase YidC.